A 256-amino-acid chain; its full sequence is Thiazole synthase (256 aa).

The Schiff-base intermediate with DXP role is filled by lysine 95. Residues glycine 156, 182 to 183 (AG), and 204 to 205 (NT) each bind 1-deoxy-D-xylulose 5-phosphate.

The protein belongs to the ThiG family. As to quaternary structure, homotetramer. Forms heterodimers with either ThiH or ThiS.

The protein resides in the cytoplasm. The catalysed reaction is [ThiS sulfur-carrier protein]-C-terminal-Gly-aminoethanethioate + 2-iminoacetate + 1-deoxy-D-xylulose 5-phosphate = [ThiS sulfur-carrier protein]-C-terminal Gly-Gly + 2-[(2R,5Z)-2-carboxy-4-methylthiazol-5(2H)-ylidene]ethyl phosphate + 2 H2O + H(+). The protein operates within cofactor biosynthesis; thiamine diphosphate biosynthesis. Functionally, catalyzes the rearrangement of 1-deoxy-D-xylulose 5-phosphate (DXP) to produce the thiazole phosphate moiety of thiamine. Sulfur is provided by the thiocarboxylate moiety of the carrier protein ThiS. In vitro, sulfur can be provided by H(2)S. This is Thiazole synthase from Escherichia coli O127:H6 (strain E2348/69 / EPEC).